The chain runs to 308 residues: Ribosomal RNA small subunit methyltransferase H (308 aa).

Residues 36 to 38 (GGH), D55, F86, D103, and Q110 each bind S-adenosyl-L-methionine.

This sequence belongs to the methyltransferase superfamily. RsmH family.

The protein localises to the cytoplasm. The enzyme catalyses cytidine(1402) in 16S rRNA + S-adenosyl-L-methionine = N(4)-methylcytidine(1402) in 16S rRNA + S-adenosyl-L-homocysteine + H(+). Functionally, specifically methylates the N4 position of cytidine in position 1402 (C1402) of 16S rRNA. This chain is Ribosomal RNA small subunit methyltransferase H, found in Helicobacter pylori (strain B38).